The sequence spans 35 residues: Riboflavin-binding protein (35 aa).

Cysteine 5 and cysteine 32 are oxidised to a cystine.

This sequence belongs to the folate receptor family.

In terms of biological role, required for the transport of riboflavin to the developing oocyte. This Struthio camelus (Common ostrich) protein is Riboflavin-binding protein.